The sequence spans 262 residues: Probable carboxylesterase SOBER1-like (262 aa).

Active-site charge relay system residues include Ser-151, Asp-205, and His-237.

The protein belongs to the AB hydrolase superfamily. AB hydrolase 2 family.

Carboxylesterase. This is Probable carboxylesterase SOBER1-like from Arabidopsis thaliana (Mouse-ear cress).